Consider the following 322-residue polypeptide: Transaldolase (322 aa).

Lys136 acts as the Schiff-base intermediate with substrate in catalysis.

Belongs to the transaldolase family. Type 1 subfamily. As to quaternary structure, homodimer.

Its subcellular location is the cytoplasm. It carries out the reaction D-sedoheptulose 7-phosphate + D-glyceraldehyde 3-phosphate = D-erythrose 4-phosphate + beta-D-fructose 6-phosphate. It participates in carbohydrate degradation; pentose phosphate pathway; D-glyceraldehyde 3-phosphate and beta-D-fructose 6-phosphate from D-ribose 5-phosphate and D-xylulose 5-phosphate (non-oxidative stage): step 2/3. In terms of biological role, transaldolase is important for the balance of metabolites in the pentose-phosphate pathway. This chain is Transaldolase, found in Xanthomonas campestris pv. campestris (strain B100).